The sequence spans 343 residues: Retroviral-like aspartic protease 1 (343 aa).

The Cytoplasmic segment spans residues Met-1 to Pro-55. A propeptide spanning residues Met-1–Asn-190 is cleaved from the precursor. A helical transmembrane segment spans residues Phe-56–Ala-76. At Glu-77–His-343 the chain is on the extracellular side. The Peptidase A2 domain maps to Val-207–Val-288. Asp-212 is a catalytic residue. Asn-276 carries N-linked (GlcNAc...) asparagine glycosylation. A propeptide spanning residues Leu-327 to His-343 is cleaved from the precursor.

As to quaternary structure, homodimer. Post-translationally, undergoes autocleavage which is necessary for activation of the protein. Expressed primarily in the granular layer of the epidermis and inner root sheath of hair follicles. In psoriatic skin, expressed throughout the stratum corneum. In ulcerated skin, expressed in the stratum granulosum of intact epidermis but almost absent from ulcerated regions. Expressed in differentiated areas of squamous cell carcinomas but not in undifferentiated tumors.

The protein resides in the membrane. Functionally, protease responsible for filaggrin processing, essential for the maintenance of a proper epidermis organization. The sequence is that of Retroviral-like aspartic protease 1 from Homo sapiens (Human).